We begin with the raw amino-acid sequence, 166 residues long: Endoribonuclease YbeY (166 aa).

The Zn(2+) site is built by histidine 111, histidine 115, and histidine 121. The disordered stretch occupies residues 140–166 (ELGYPDPYADDESADPPHSDTPSKDHE). Basic and acidic residues predominate over residues 154–166 (DPPHSDTPSKDHE).

It belongs to the endoribonuclease YbeY family. Zn(2+) serves as cofactor.

Its subcellular location is the cytoplasm. Single strand-specific metallo-endoribonuclease involved in late-stage 70S ribosome quality control and in maturation of the 3' terminus of the 16S rRNA. The polypeptide is Endoribonuclease YbeY (Pseudomonas syringae pv. syringae (strain B728a)).